The following is a 109-amino-acid chain: Latartoxin-2a (109 aa).

Residues 1 to 19 (MKVLVIIALCLVAFQSALS) form the signal peptide. Residues 20 to 37 (KKIENFESYIEDLKSEAR) constitute a propeptide, removed in mature form. A Processing quadruplet motif motif is present at residues 34 to 37 (SEAR). Intrachain disulfides connect C39-C56, C46-C67, C55-C81, C69-C79, and C72-C93. Position 108 is a valine amide (V108).

This sequence belongs to the neurotoxin 19 (CSTX) family. 11 (latartoxin) subfamily. Contains 5 disulfide bonds. In terms of processing, cleavage of the propeptide depends on the processing quadruplet motif (XXXR, with at least one of X being E). In terms of tissue distribution, expressed by the venom gland.

Its subcellular location is the secreted. Insect toxin. Causes paralysis in larvae of C.vicina by depolarizing membranes at the neuromuscular junction. This chain is Latartoxin-2a, found in Lachesana tarabaevi (Spider).